The sequence spans 240 residues: MORN repeat-containing protein 3 (240 aa).

An interaction with MDM2 region spans residues Cys6–Gly35. MORN repeat units lie at residues Tyr38–Ala60, Tyr62–Thr84, Tyr91–Tyr113, Tyr114–Ile136, Tyr137–Arg159, Tyr160–Gln182, and Phe184–Glu205. The interaction with SIRT1 stretch occupies residues Thr76–Lys100. The segment at Ala206–Asp240 is interaction with TP53.

In terms of assembly, interacts with MEIG1. Interacts with TP53, MDM2 and SIRT1; the interactions mediate post-transcriptional modifications of TP53 by MDM2 and SIRT1.

It is found in the cytoplasmic vesicle. The protein resides in the secretory vesicle. The protein localises to the acrosome. Functionally, assembles a suppression complex (suppresome) by tethering SIRT1 and MDM2 to regulate composite modifications of p53/TP53. Confers both deacetylation-mediated functional inactivation, by SIRT1, and ubiquitination-dependent degradation, by MDM2, of p53/TP53, promoting a proliferative and cell survival behaviors. May play a role in the regulation of spermatogenesis. The protein is MORN repeat-containing protein 3 of Homo sapiens (Human).